A 180-amino-acid chain; its full sequence is Large ribosomal subunit protein uL5 (180 aa).

The protein belongs to the universal ribosomal protein uL5 family. Part of the 50S ribosomal subunit; part of the 5S rRNA/L5/L18/L25 subcomplex. Contacts the 5S rRNA and the P site tRNA. Forms a bridge to the 30S subunit in the 70S ribosome.

This is one of the proteins that bind and probably mediate the attachment of the 5S RNA into the large ribosomal subunit, where it forms part of the central protuberance. In the 70S ribosome it contacts protein S13 of the 30S subunit (bridge B1b), connecting the 2 subunits; this bridge is implicated in subunit movement. Contacts the P site tRNA; the 5S rRNA and some of its associated proteins might help stabilize positioning of ribosome-bound tRNAs. This is Large ribosomal subunit protein uL5 from Chlamydia caviae (strain ATCC VR-813 / DSM 19441 / 03DC25 / GPIC) (Chlamydophila caviae).